The chain runs to 322 residues: DNA repair and recombination protein RadA (322 aa).

105 to 112 (GMYGSGKT) serves as a coordination point for ATP.

This sequence belongs to the eukaryotic RecA-like protein family.

Functionally, involved in DNA repair and in homologous recombination. Binds and assemble on single-stranded DNA to form a nucleoprotein filament. Hydrolyzes ATP in a ssDNA-dependent manner and promotes DNA strand exchange between homologous DNA molecules. This Methanococcus maripaludis (strain C7 / ATCC BAA-1331) protein is DNA repair and recombination protein RadA.